Consider the following 223-residue polypeptide: Deoxyribose-phosphate aldolase (223 aa).

The active-site Proton donor/acceptor is D89. The active-site Schiff-base intermediate with acetaldehyde is the K152. Residue K181 is the Proton donor/acceptor of the active site.

It belongs to the DeoC/FbaB aldolase family. DeoC type 1 subfamily.

It localises to the cytoplasm. The enzyme catalyses 2-deoxy-D-ribose 5-phosphate = D-glyceraldehyde 3-phosphate + acetaldehyde. The protein operates within carbohydrate degradation; 2-deoxy-D-ribose 1-phosphate degradation; D-glyceraldehyde 3-phosphate and acetaldehyde from 2-deoxy-alpha-D-ribose 1-phosphate: step 2/2. Catalyzes a reversible aldol reaction between acetaldehyde and D-glyceraldehyde 3-phosphate to generate 2-deoxy-D-ribose 5-phosphate. The polypeptide is Deoxyribose-phosphate aldolase (Bacillus cereus (strain Q1)).